Reading from the N-terminus, the 256-residue chain is MVYGELIYHPVVTKLLKFLDSSASREKLLRLLQYLCRFLTYYTFRRNINIETIQLIKKIQSSIAISRKPLRFLKNLPHLKNLNKIYSNELLDSTIRIGDLIKNFGYALYFQFDTLQWLKLLGLLTSKNSGALYFKVDKLAANFWLIGLTGSIITDLRNLKISYDSNKALLNEINSQEKTDGSITSDEKLIVQNNELILKNNEKINLNKRDLFKNVLDSLIALKGSQLIDLNDGVLGFAGIITSIIGIEDIWNATKA.

It belongs to the peroxin-11 family.

It localises to the peroxisome membrane. Involved in peroxisomal proliferation. Could participate in peroxisomal elongation or fission. May be involved in parceling of peroxisomes into regular quanta. This chain is Peroxisomal membrane protein PMP30A (PEX11A), found in Candida boidinii (Yeast).